The primary structure comprises 153 residues: Small ribosomal subunit protein bS16 (153 aa).

The disordered stretch occupies residues 114–153 (ENEPVGEAITPKKKKAKAEDAEAAADAPAEAAAESEAADK). Over residues 137-153 (AADAPAEAAAESEAADK) the composition is skewed to low complexity.

The protein belongs to the bacterial ribosomal protein bS16 family.

The protein is Small ribosomal subunit protein bS16 of Rhodococcus jostii (strain RHA1).